The sequence spans 228 residues: 7-cyano-7-deazaguanine synthase (228 aa).

8–18 serves as a coordination point for ATP; the sequence is LSGGLDSTTCL. The Zn(2+) site is built by Cys188, Cys198, Cys201, and Cys204.

It belongs to the QueC family. It depends on Zn(2+) as a cofactor.

The catalysed reaction is 7-carboxy-7-deazaguanine + NH4(+) + ATP = 7-cyano-7-deazaguanine + ADP + phosphate + H2O + H(+). It participates in purine metabolism; 7-cyano-7-deazaguanine biosynthesis. In terms of biological role, catalyzes the ATP-dependent conversion of 7-carboxy-7-deazaguanine (CDG) to 7-cyano-7-deazaguanine (preQ(0)). This chain is 7-cyano-7-deazaguanine synthase, found in Legionella pneumophila (strain Corby).